The sequence spans 100 residues: Nucleoid-associated protein jhp_0031 (100 aa).

This sequence belongs to the YbaB/EbfC family. Homodimer.

The protein resides in the cytoplasm. It is found in the nucleoid. In terms of biological role, binds to DNA and alters its conformation. May be involved in regulation of gene expression, nucleoid organization and DNA protection. In Helicobacter pylori (strain J99 / ATCC 700824) (Campylobacter pylori J99), this protein is Nucleoid-associated protein jhp_0031.